Consider the following 3461-residue polypeptide: Reelin (3461 aa).

The first 26 residues, Met-1 to Ala-26, serve as a signal peptide directing secretion. The 165-residue stretch at Ala-27–Ser-191 folds into the Reelin domain. A disulfide bond links Cys-41 and Cys-127. N-linked (GlcNAc...) asparagine glycosylation is present at Asn-141. Cysteines 155 and 179 form a disulfide. Residues Asn-258, Asn-290, and Asn-306 are each glycosylated (N-linked (GlcNAc...) asparagine). A disulfide bridge connects residues Cys-540 and Cys-581. The stretch at Glu-593 to Leu-604 is one BNR 1 repeat. Residues Cys-609 and Cys-614 are joined by a disulfide bond. N-linked (GlcNAc...) asparagine glycosylation occurs at Asn-629. One can recognise an EGF-like 1 domain in the interval Ile-671–Glu-702. Disulfide bonds link Cys-675–Cys-685 and Cys-692–Cys-701. One copy of the BNR 2 repeat lies at His-799–Leu-810. Cys-895 and Cys-937 form a disulfide bridge. The stretch at Glu-952 to Leu-963 is one BNR 3 repeat. 3 disulfides stabilise this stretch: Cys-968/Cys-975, Cys-1034/Cys-1044, and Cys-1051/Cys-1060. In terms of domain architecture, EGF-like 2 spans Ile-1030–His-1061. Residues Gln-1157–Leu-1168 form a BNR 4 repeat. N-linked (GlcNAc...) asparagine glycosylation is present at Asn-1267. One copy of the BNR 5 repeat lies at Gln-1323–Leu-1334. 4 disulfides stabilise this stretch: Cys-1339/Cys-1348, Cys-1413/Cys-1423, Cys-1417/Cys-1428, and Cys-1430/Cys-1441. The region spanning Ile-1409–Val-1442 is the EGF-like 3 domain. Residue Asn-1447 is glycosylated (N-linked (GlcNAc...) asparagine). Cys-1475 and Cys-1522 are disulfide-bonded. The stretch at Gln-1535–Leu-1546 is one BNR 6 repeat. An N-linked (GlcNAc...) asparagine glycan is attached at Asn-1600. The cysteines at positions 1633 and 1673 are disulfide-linked. The BNR 7 repeat unit spans residues Gln-1686–Leu-1697. A disulfide bridge links Cys-1702 with Cys-1709. Asn-1750 carries N-linked (GlcNAc...) asparagine glycosylation. The 32-residue stretch at Leu-1765–Val-1796 folds into the EGF-like 4 domain. One copy of the BNR 8 repeat lies at Gln-1884–Leu-1895. Asn-1921 carries N-linked (GlcNAc...) asparagine glycosylation. A disulfide bridge links Cys-1983 with Cys-2030. A BNR 9 repeat occupies Glu-2043–Leu-2054. A disulfide bond links Cys-2059 and Cys-2070. Zn(2+) contacts are provided by His-2061 and His-2074. Positions Ile-2129–Lys-2161 constitute an EGF-like 5 domain. Intrachain disulfides connect Cys-2133–Cys-2143, Cys-2137–Cys-2149, and Cys-2151–Cys-2160. A glycan (N-linked (GlcNAc...) asparagine) is linked at Asn-2145. Glu-2179 contributes to the Zn(2+) binding site. A disulfide bond links Cys-2195 and Cys-2235. A BNR 10 repeat occupies Gln-2250–Leu-2261. Glu-2264 contacts Zn(2+). 2 N-linked (GlcNAc...) asparagine glycosylation sites follow: Asn-2269 and Asn-2317. Cystine bridges form between Cys-2348–Cys-2387, Cys-2393–Cys-2559, Cys-2482–Cys-2492, Cys-2486–Cys-2497, Cys-2499–Cys-2508, and Cys-2544–Cys-2584. Zn(2+) is bound by residues Glu-2397, Glu-2399, and His-2460. Residues Glu-2399 to Pro-2410 form a BNR 11 repeat. The EGF-like 6 domain maps to Ile-2478–Asp-2509. Asn-2569 carries N-linked (GlcNAc...) asparagine glycosylation. 2 BNR repeats span residues Glu-2598–Leu-2609 and Gln-2778–Tyr-2789. Cys-2794 and Cys-2801 are oxidised to a cystine. An EGF-like 7 domain is found at Leu-2853–Tyr-2884. Cys-2919 and Cys-2966 are oxidised to a cystine. N-linked (GlcNAc...) asparagine glycosylation occurs at Asn-2962. One copy of the BNR 14 repeat lies at Asp-2979–Leu-2990. N-linked (GlcNAc...) asparagine glycosylation is found at Asn-3016 and Asn-3073. Residues Glu-3143 to Leu-3155 form a BNR 15 repeat. A disulfide bridge connects residues Cys-3160 and Cys-3170. A glycan (N-linked (GlcNAc...) asparagine) is linked at Asn-3185. Positions Ile-3228–Ser-3260 constitute an EGF-like 8 domain. Cystine bridges form between Cys-3232/Cys-3242, Cys-3236/Cys-3248, Cys-3250/Cys-3259, and Cys-3296/Cys-3346. The stretch at Gln-3363 to Val-3374 is one BNR 16 repeat. 2 N-linked (GlcNAc...) asparagine glycosylation sites follow: Asn-3412 and Asn-3439.

The protein belongs to the reelin family. In terms of assembly, oligomer of disulfide-linked homodimers. In terms of processing, N-glycosylated and to a lesser extent also O-glycosylated. In terms of tissue distribution, the major isoform 1 is neuron-specific. It is abundantly produced during brain ontogenesis by the Cajal-Retzius cells and other pioneer neurons located in the telencephalic marginal zone and by granule cells of the external granular layer of the cerebellum. Expression is located in deeper layers in the developing hippocampus and olfactory bulb, low levels of expression are also detected in the immature striatum. At early developmental stages, expressed also in hypothalamic differentiation fields, tectum and spinal cord. A moderate to low level of expression occurs in the septal area, striatal fields, habenular nuclei, some thalamic nuclei, particularly the lateral geniculate, the retina and some nuclei of the reticular formation in the central field of the medulla. Very low levels found in liver and kidney. No expression in radial glial cells, cortical plate, Purkinje cells and inferior olivary neurons. The minor isoform 2 is only expressed in non neuronal cells. The minor isoform 3 is found in the same cells as isoform 1, but is almost undetectable in retina and brain stem.

The protein localises to the secreted. It is found in the extracellular space. Its subcellular location is the extracellular matrix. In terms of biological role, extracellular matrix serine protease secreted by pioneer neurons that plays a role in layering of neurons in the cerebral cortex and cerebellum by coordinating cell positioning during neurodevelopment. Regulates microtubule function in neurons and neuronal migration. Binding to the extracellular domains of lipoprotein receptors VLDLR and LRP8/APOER2 induces tyrosine phosphorylation of DAB1 and modulation of TAU phosphorylation. Affects migration of sympathetic preganglionic neurons in the spinal cord, where it seems to act as a barrier to neuronal migration. Enzymatic activity is important for the modulation of cell adhesion. In Mus musculus (Mouse), this protein is Reelin (Reln).